The following is a 316-amino-acid chain: IDS-like terpene synthase 2 (316 aa).

Mg(2+)-binding residues include Asp69 and Asp73.

It belongs to the FPP/GGPP synthase family. Requires Mg(2+) as cofactor.

It catalyses the reaction (2E)-geranyl diphosphate + H2O = linalool + diphosphate. It carries out the reaction (2E,6E)-farnesyl diphosphate + H2O = (6E)-nerolidol + diphosphate. Functionally, terpene synthase that shows monoterpene synthase activity and produces linalool, using geranyl diphosphate (GPP) as substrate. Also shows sesquiterpene synthase activity as it is able to convert farnesyl diphosphate (FPP) into (E)-nerolidol. This chain is IDS-like terpene synthase 2, found in Melampsora larici-populina (strain 98AG31 / pathotype 3-4-7) (Poplar leaf rust fungus).